The primary structure comprises 142 residues: Universal stress protein G (142 aa).

Belongs to the universal stress protein A family.

The polypeptide is Universal stress protein G (uspG) (Shigella flexneri).